Consider the following 375-residue polypeptide: Glutamate 5-kinase (375 aa).

Lys17 contributes to the ATP binding site. Substrate is bound by residues Ser57, Asp144, and Asn156. Position 176–177 (176–177 (TD)) interacts with ATP. The region spanning 283–361 (KGELILDTGA…DEIEGILGYV (79 aa)) is the PUA domain.

Belongs to the glutamate 5-kinase family.

It is found in the cytoplasm. It catalyses the reaction L-glutamate + ATP = L-glutamyl 5-phosphate + ADP. It participates in amino-acid biosynthesis; L-proline biosynthesis; L-glutamate 5-semialdehyde from L-glutamate: step 1/2. Its function is as follows. Catalyzes the transfer of a phosphate group to glutamate to form L-glutamate 5-phosphate. The protein is Glutamate 5-kinase of Thioalkalivibrio sulfidiphilus (strain HL-EbGR7).